A 149-amino-acid chain; its full sequence is C-type lectin domain family 2 member B (149 aa).

The Cytoplasmic portion of the chain corresponds to M1–K7. A helical; Signal-anchor for type II membrane protein transmembrane segment spans residues C8–V25. Topologically, residues K26 to H149 are extracellular. A disulfide bridge links C35 with C46. The region spanning F42 to R145 is the C-type lectin domain. N57, N62, and N100 each carry an N-linked (GlcNAc...) asparagine glycan. 2 disulfides stabilise this stretch: C63-C144 and C123-C136.

In terms of assembly, homodimer. Interacts with NKp80/KLRF1. (Microbial infection) Ubiquitinated by human herpesvirus 8 protein K5, leading to endolysosomal degradation. In terms of processing, N-linked glycosylated; required to enable surface expression and the extent of surface expression correlates with the number of functional conventional N-glycosylation sites. In terms of tissue distribution, expressed preferentially in lymphoid tissues, and in most hematopoietic cell types.

The protein localises to the cell membrane. It is found in the golgi apparatus membrane. In terms of biological role, membrane-bound protein expressed on myeloid cells which acts as a ligand to stimulate the activating receptor NKp80/KLRF1, expressed on the surface of natural killer (NK) cells. In turn, stimulates NK-cell cytotoxicity and cytokine production leading to the cytolysis of malignant CLEC2B-expressing myeloid cells. This chain is C-type lectin domain family 2 member B (CLEC2B), found in Homo sapiens (Human).